Here is a 68-residue protein sequence, read N- to C-terminus: Metallothionein (68 aa).

It belongs to the metallothionein superfamily. Type 4 family.

Metallothioneins have a high content of cysteine residues that bind various heavy metals. The chain is Metallothionein (MT1) from Lytechinus pictus (Painted sea urchin).